Here is a 251-residue protein sequence, read N- to C-terminus: HTH-type transcriptional regulator UlaR (251 aa).

The region spanning Glu-3–Ala-58 is the HTH deoR-type domain. Residues Val-20–Asp-39 constitute a DNA-binding region (H-T-H motif).

The protein localises to the cytoplasm. In terms of biological role, represses ulaG and the ulaABCDEF operon. The sequence is that of HTH-type transcriptional regulator UlaR from Salmonella agona (strain SL483).